We begin with the raw amino-acid sequence, 206 residues long: Protease (206 aa).

Active-site residues include H54, D71, and C122.

It belongs to the peptidase C5 family. As to quaternary structure, interacts with protease cofactor pVI-C; this interaction is necessary for protease activation.

Its subcellular location is the virion. It localises to the host nucleus. The catalysed reaction is Cleaves proteins of the adenovirus and its host cell at two consensus sites: -Yaa-Xaa-Gly-Gly-|-Xaa- and -Yaa-Xaa-Gly-Xaa-|-Gly- (in which Yaa is Met, Ile or Leu, and Xaa is any amino acid).. Requires DNA and protease cofactor for maximal activation. Inside nascent virions, becomes partially activated by binding to the viral DNA, allowing it to cleave the cofactor that binds to the protease and fully activates it. Actin, like the viral protease cofactor, seems to act as a cofactor in the cleavage of cytokeratin 18 and of actin itself. Cleaves viral precursor proteins (pTP, pIIIa, pVI, pVII, pVIII, and pX) inside newly assembled particles giving rise to mature virions. Protease complexed to its cofactor slides along the viral DNA to specifically locate and cleave the viral precursors. Mature virions have a weakened organization compared to the unmature virions, thereby facilitating subsequent uncoating. Without maturation, the particle lacks infectivity and is unable to uncoat. Late in adenovirus infection, in the cytoplasm, may participate in the cytoskeleton destruction. Cleaves host cell cytoskeletal keratins K7 and K18. The sequence is that of Protease from Homo sapiens (Human).